Here is a 455-residue protein sequence, read N- to C-terminus: Tubulin delta chain (455 aa).

A GTP-binding site is contributed by 143–149; sequence AGGTGSG.

The protein belongs to the tubulin family. As to quaternary structure, found in a complex with TEDC1, TEDC2, TUBE1 and TUBD1. As to expression, highly expressed in testis.

The protein localises to the cell projection. Its subcellular location is the cilium. It is found in the cytoplasm. It localises to the cytoskeleton. The protein resides in the microtubule organizing center. The protein localises to the centrosome. Its subcellular location is the centriole. It is found in the nucleus. Functionally, acts as a positive regulator of hedgehog signaling and regulates ciliary function. The sequence is that of Tubulin delta chain (Tubd1) from Mus musculus (Mouse).